We begin with the raw amino-acid sequence, 677 residues long: Methionine--tRNA ligase (677 aa).

Residues 15-25 (PYANGSIHLGH) carry the 'HIGH' region motif. Residues cysteine 146, cysteine 149, cysteine 159, and cysteine 162 each coordinate Zn(2+). The 'KMSKS' region motif lies at 333–337 (KMSKS). ATP is bound at residue lysine 336. The tRNA-binding domain occupies 575–677 (DFAKVDLRVA…AGAKPGHQVK (103 aa)).

It belongs to the class-I aminoacyl-tRNA synthetase family. MetG type 1 subfamily. As to quaternary structure, homodimer. Zn(2+) serves as cofactor.

It localises to the cytoplasm. It catalyses the reaction tRNA(Met) + L-methionine + ATP = L-methionyl-tRNA(Met) + AMP + diphosphate. Functionally, is required not only for elongation of protein synthesis but also for the initiation of all mRNA translation through initiator tRNA(fMet) aminoacylation. The sequence is that of Methionine--tRNA ligase from Shigella boydii serotype 18 (strain CDC 3083-94 / BS512).